The sequence spans 349 residues: Probable sugar phosphate/phosphate translocator At5g25400 (349 aa).

10 consecutive transmembrane segments (helical) span residues 15–35 (IIIS…VIVY), 49–69 (FPIS…FLLI), 89–109 (VVPI…AYIY), 113–133 (SFIQ…GVLF), 141–161 (ETMM…YGEA), 165–185 (VWGV…LVMI), 205–225 (VAPC…FPIL), 236–256 (LIFG…FLLV), 263–283 (TMNV…WSVI), and 286–306 (TVTP…AYYN). Residues 38 to 156 (YILDKKMYDW…LSISFGVAIA (119 aa)) enclose the EamA domain. The interval 321-349 (TAQQVDEETGRLLEEREGNEGGRKNEPED) is disordered. Positions 328–349 (ETGRLLEEREGNEGGRKNEPED) are enriched in basic and acidic residues.

This sequence belongs to the TPT transporter family. TPT (TC 2.A.7.9) subfamily.

The protein resides in the membrane. The protein is Probable sugar phosphate/phosphate translocator At5g25400 of Arabidopsis thaliana (Mouse-ear cress).